The sequence spans 450 residues: N-lysine methyltransferase SETD6 (450 aa).

Positions 1–10 (MATQAKRRRV) are enriched in basic residues. The tract at residues 1–20 (MATQAKRRRVAGPAGSDDDP) is disordered. One can recognise an SET domain in the interval 39–263 (PKVAVSRQGT…KGHEIFNTYG (225 aa)). The residue at position 40 (Lys-40) is an N6-methylated lysine; by autocatalysis. Residue 50-52 (AGY) coordinates S-adenosyl-L-methionine. Trp-99 serves as a coordination point for substrate. Lys-156 is subject to N6-methylated lysine; by autocatalysis. Tyr-200 is a binding site for S-adenosyl-L-methionine. Ser-201 and Gln-203 together coordinate substrate. S-adenosyl-L-methionine-binding positions include 228–229 (NH) and Tyr-274. Residue Lys-349 is modified to N6-methylated lysine; by autocatalysis.

Belongs to the class V-like SAM-binding methyltransferase superfamily. Histone-lysine methyltransferase family. SETD6 subfamily. In terms of assembly, monomer, homodimer and homotrimer; these structures are stabilized in the presence of S-adenosyl-L-methionine (SAM). Automethylated.

Its subcellular location is the nucleus. It carries out the reaction L-lysyl-[protein] + S-adenosyl-L-methionine = N(6)-methyl-L-lysyl-[protein] + S-adenosyl-L-homocysteine + H(+). The catalysed reaction is L-lysyl(8)-[histone H2AZ] + S-adenosyl-L-methionine = N(6)-methyl-L-lysyl(8)-[histone H2AZ] + S-adenosyl-L-homocysteine + H(+). In terms of biological role, protein-lysine N-methyltransferase. Monomethylates 'Lys-310' of the RELA subunit of NF-kappa-B complex, leading to down-regulation of NF-kappa-B transcription factor activity. Monomethylates 'Lys-8' of H2AZ (H2AZK8me1). Required for the maintenance of embryonic stem cell self-renewal. Methylates PAK4. This Bos taurus (Bovine) protein is N-lysine methyltransferase SETD6 (SETD6).